The sequence spans 484 residues: DNA-binding protein (484 aa).

The interval Met-1–Pro-69 is disordered. A compositionally biased stretch (low complexity) spans Ser-51 to Glu-60. Tyr-150 is subject to Phosphotyrosine; by host. 2 residues coordinate Zn(2+): Cys-239 and His-241. Residues Val-252–Ile-286 form a flexible loop region. Positions 294, 310, 351, 353, 405, and 421 each coordinate Zn(2+). The C-terminal arm, DBP binding stretch occupies residues Ile-468–Phe-484.

The protein belongs to the adenoviridae E2A DNA-binding protein family. In terms of assembly, homomultimerizes on viral ssDNA bound to pTP. Forms a initiation complex with viral polymerase, pTP and hosts NFIA and POU2F1/OCT1. Interacts with host SRCAP.

It is found in the host nucleus. Plays a role in the elongation phase of viral strand displacement replication by unwinding the template in an ATP-independent fashion, employing its capacity to form multimers. Also enhances the rate of initiation. Released from template upon second strand synthesis. Assembles in complex with viral pTP, viral pol, host NFIA and host POU2F1/OCT1 on viral origin of replication. Covers the whole ssDNA genome during synthesis. The complementary strand synthesis induces its relese from DNA template. May inhibit cellular transcription mediated by the interaction between host SRCAP and CBP. This chain is DNA-binding protein, found in Human adenovirus A serotype 12 (HAdV-12).